The chain runs to 333 residues: tRNA (guanine(37)-N(1))/4-demethylwyosine(37)-methyltransferase Taw22 (333 aa).

S-adenosyl-L-methionine-binding positions include R174, F191, 213 to 214, and 243 to 244; these read EI and DV.

The protein belongs to the class I-like SAM-binding methyltransferase superfamily. TRM5/TYW2 family.

Its subcellular location is the cytoplasm. The catalysed reaction is guanosine(37) in tRNA + S-adenosyl-L-methionine = N(1)-methylguanosine(37) in tRNA + S-adenosyl-L-homocysteine + H(+). The enzyme catalyses 4-demethylwyosine(37) in tRNA(Phe) + S-adenosyl-L-methionine = isowyosine(37) in tRNA(Phe) + S-adenosyl-L-homocysteine + H(+). Its function is as follows. Catalyzes both the N1-methylation of guanosine and the C7-methylation of 4-demethylwyosine (imG-14) at position 37 in tRNA(Phe). This is tRNA (guanine(37)-N(1))/4-demethylwyosine(37)-methyltransferase Taw22 from Pyrococcus abyssi (strain GE5 / Orsay).